The following is a 479-amino-acid chain: ATP-dependent protease ATPase subunit HslU (479 aa).

Residues I32, 74–79 (GVGKTE), D290, E355, and R427 each bind ATP.

The protein belongs to the ClpX chaperone family. HslU subfamily. As to quaternary structure, a double ring-shaped homohexamer of HslV is capped on each side by a ring-shaped HslU homohexamer. The assembly of the HslU/HslV complex is dependent on binding of ATP.

It is found in the cytoplasm. Functionally, ATPase subunit of a proteasome-like degradation complex; this subunit has chaperone activity. The binding of ATP and its subsequent hydrolysis by HslU are essential for unfolding of protein substrates subsequently hydrolyzed by HslV. HslU recognizes the N-terminal part of its protein substrates and unfolds these before they are guided to HslV for hydrolysis. The sequence is that of ATP-dependent protease ATPase subunit HslU from Leptospira interrogans serogroup Icterohaemorrhagiae serovar Lai (strain 56601).